Consider the following 335-residue polypeptide: MNQTINLKGRSYLAEKDFSEEEILYLLDLAQKLKEKKAQGIRHRYLEGKNIALLFEKPSTRTRCAFTTACIDLGAHPEYLGKDDIQLGKKESIEDTAKVLGRMFDGIEFRGFEHEKVISLAEHSGVPVWNGLTDLWHPTQMLADFMTVKEHTGRVKGVKLTYIGDGRNNVANSLLIGGAKVGMDVRICSPQELFPDQDIVKMAEAFAEESGGKITVTSDTDKAVSGADVLYTDVWVSMGEEDKFAERIKLLKPYQVNMDLVKKTGNDNVIFLHCLPAFHDLHTTYGQNVYEQHGLKEMEVTDEVFRSKHSKVFDEAENRMHTIKAVMAATLGDLD.

Carbamoyl phosphate-binding positions include Ser59 to Thr62, Gln86, Arg110, and His137 to Gln140. Residues Asn169, Asp233, and Ser237–Met238 each bind L-ornithine. Carbamoyl phosphate is bound by residues Cys274 to Leu275 and Arg319.

The protein belongs to the aspartate/ornithine carbamoyltransferase superfamily. OTCase family.

It localises to the cytoplasm. The catalysed reaction is carbamoyl phosphate + L-ornithine = L-citrulline + phosphate + H(+). It participates in amino-acid degradation; L-arginine degradation via ADI pathway; carbamoyl phosphate from L-arginine: step 2/2. In terms of biological role, reversibly catalyzes the transfer of the carbamoyl group from carbamoyl phosphate (CP) to the N(epsilon) atom of ornithine (ORN) to produce L-citrulline. The chain is Ornithine carbamoyltransferase, catabolic (arcB) from Bacillus licheniformis (strain ATCC 14580 / DSM 13 / JCM 2505 / CCUG 7422 / NBRC 12200 / NCIMB 9375 / NCTC 10341 / NRRL NRS-1264 / Gibson 46).